Here is a 126-residue protein sequence, read N- to C-terminus: MPTINQLIRKPRARLTVKSKSPAMQNSPQRRGVCTRVYTTTPKKPNSALRKVAKVRLTNGFEVISYIGGEGHNLQEHSVVLIRGGRVKDLPGVRYHIVRGSLDLQGVKDRKQARSKYGAKRAKKAA.

Asp89 is subject to 3-methylthioaspartic acid.

The protein belongs to the universal ribosomal protein uS12 family. Part of the 30S ribosomal subunit. Contacts proteins S8 and S17. May interact with IF1 in the 30S initiation complex.

Its function is as follows. With S4 and S5 plays an important role in translational accuracy. In terms of biological role, interacts with and stabilizes bases of the 16S rRNA that are involved in tRNA selection in the A site and with the mRNA backbone. Located at the interface of the 30S and 50S subunits, it traverses the body of the 30S subunit contacting proteins on the other side and probably holding the rRNA structure together. The combined cluster of proteins S8, S12 and S17 appears to hold together the shoulder and platform of the 30S subunit. The polypeptide is Small ribosomal subunit protein uS12 (Polynucleobacter necessarius subsp. necessarius (strain STIR1)).